Reading from the N-terminus, the 871-residue chain is DNA mismatch repair protein MutS (871 aa).

An ATP-binding site is contributed by 618–625 (GPNMSGKS).

This sequence belongs to the DNA mismatch repair MutS family.

In terms of biological role, this protein is involved in the repair of mismatches in DNA. It is possible that it carries out the mismatch recognition step. This protein has a weak ATPase activity. The polypeptide is DNA mismatch repair protein MutS (Christiangramia forsetii (strain DSM 17595 / CGMCC 1.15422 / KT0803) (Gramella forsetii)).